The chain runs to 146 residues: Acireductone dioxygenase (146 aa).

4 residues coordinate Fe(2+): H71, H73, E77, and H116. Residues H71, H73, E77, and H116 each contribute to the Ni(2+) site.

Belongs to the acireductone dioxygenase (ARD) family. It depends on Fe(2+) as a cofactor. The cofactor is Ni(2+).

The protein localises to the cytoplasm. It is found in the nucleus. The enzyme catalyses 1,2-dihydroxy-5-(methylsulfanyl)pent-1-en-3-one + O2 = 4-methylsulfanyl-2-oxobutanoate + formate + 2 H(+). The catalysed reaction is 1,2-dihydroxy-5-(methylsulfanyl)pent-1-en-3-one + O2 = 3-(methylsulfanyl)propanoate + CO + formate + 2 H(+). It participates in amino-acid biosynthesis; L-methionine biosynthesis via salvage pathway; L-methionine from S-methyl-5-thio-alpha-D-ribose 1-phosphate: step 5/6. In terms of biological role, catalyzes 2 different reactions between oxygen and the acireductone 1,2-dihydroxy-3-keto-5-methylthiopentene (DHK-MTPene) depending upon the metal bound in the active site. Fe-containing acireductone dioxygenase (Fe-ARD) produces formate and 2-keto-4-methylthiobutyrate (KMTB), the alpha-ketoacid precursor of methionine in the methionine recycle pathway. Ni-containing acireductone dioxygenase (Ni-ARD) produces methylthiopropionate, carbon monoxide and formate, and does not lie on the methionine recycle pathway. The sequence is that of Acireductone dioxygenase from Heterostelium pallidum (strain ATCC 26659 / Pp 5 / PN500) (Cellular slime mold).